A 540-amino-acid chain; its full sequence is Probable H/ACA ribonucleoprotein complex subunit 4 (540 aa).

The disordered stretch occupies residues 1–24 (MTTDKKSKSKSSEKSTQEVEQVIK). Aspartate 109 (nucleophile) is an active-site residue. Residues 280–355 (YKRIVVKDSA…VVATIKRVIM (76 aa)) enclose the PUA domain. The disordered stretch occupies residues 414 to 540 (SPVESMNVDT…DKKEKKKSKN (127 aa)). A coiled-coil region spans residues 448–494 (KKEKKDKKEKKKDSSDDESEEEKSSKKDKKEKKEKKEKKEKKSSKDD). The segment covering 473 to 489 (KKDKKEKKEKKEKKEKK) has biased composition (basic residues). Basic and acidic residues-rich tracts occupy residues 490–503 (SSKD…SKKE) and 513–528 (SDKD…DKKD). A compositionally biased stretch (basic residues) spans 529-540 (KKDKKEKKKSKN).

It belongs to the pseudouridine synthase TruB family. Component of the small nucleolar ribonucleoprotein particles containing H/ACA-type snoRNAs (H/ACA snoRNPs).

The protein localises to the nucleus. It is found in the nucleolus. The enzyme catalyses a uridine in RNA = a pseudouridine in RNA. Functionally, plays a central role in ribosomal RNA processing. Probable catalytic subunit of H/ACA small nucleolar ribonucleoprotein (H/ACA snoRNP) complex, which catalyzes pseudouridylation of rRNA. This involves the isomerization of uridine such that the ribose is subsequently attached to C5, instead of the normal N1. Pseudouridine ('psi') residues may serve to stabilize the conformation of rRNAs. This chain is Probable H/ACA ribonucleoprotein complex subunit 4 (nola4), found in Dictyostelium discoideum (Social amoeba).